Reading from the N-terminus, the 339-residue chain is tRNA dimethylallyltransferase (339 aa).

Residue 36–43 (GPTGSGKT) coordinates ATP. Position 38 to 43 (38 to 43 (TGSGKT)) interacts with substrate. The interaction with substrate tRNA stretch occupies residues 61-64 (DSMQ).

This sequence belongs to the IPP transferase family. As to quaternary structure, monomer. Mg(2+) is required as a cofactor.

It catalyses the reaction adenosine(37) in tRNA + dimethylallyl diphosphate = N(6)-dimethylallyladenosine(37) in tRNA + diphosphate. Functionally, catalyzes the transfer of a dimethylallyl group onto the adenine at position 37 in tRNAs that read codons beginning with uridine, leading to the formation of N6-(dimethylallyl)adenosine (i(6)A). This is tRNA dimethylallyltransferase from Chlamydia trachomatis serovar L2 (strain ATCC VR-902B / DSM 19102 / 434/Bu).